Consider the following 782-residue polypeptide: Protein PAT1 homolog 1 (782 aa).

Disordered regions lie at residues 96 to 153 (GPKH…HSKP), 177 to 217 (LPES…YSAP), 332 to 372 (VREH…SKHM), and 460 to 481 (EVDSSPGFNDGSGDHKGSGKHL). A compositionally biased stretch (low complexity) spans 108–117 (SGSFSRESSS). Residues 208–217 (GGSQLTYSAP) show a composition bias toward polar residues. Residues 335-347 (HKHKSSHRSRKNR) are compositionally biased toward basic residues. Over residues 348–366 (GLSQQTSDAASQKSETGLQ) the composition is skewed to polar residues. Positions 471–481 (SGDHKGSGKHL) are enriched in basic and acidic residues.

Interacts with AFPH2/NINJA. Expressed in root vasculature, shoot apical meristem (SAM) and leaves.

In terms of biological role, activator of mRNA decapping. Involved in mRNA decay via decapping. Involved in the regulation of root stem cell niche identity. Maintains root stem cell niche stability through the interaction with the negative regulator of jasmonate signaling AFPH2/NINJA, and the regulation of cell division. The polypeptide is Protein PAT1 homolog 1 (Arabidopsis thaliana (Mouse-ear cress)).